Here is a 681-residue protein sequence, read N- to C-terminus: Peroxisomal acyl-coenzyme A oxidase 2 (681 aa).

Ser3 and Ser9 each carry phosphoserine. An N6-succinyllysine mark is found at Lys66, Lys137, Lys303, Lys453, Lys561, and Lys667. The short motif at 679–681 (HKM) is the Microbody targeting signal element.

This sequence belongs to the acyl-CoA oxidase family. In terms of assembly, homodimer. Requires FAD as cofactor. As to expression, most abundant in liver. Also expressed in kidney. Not present in any other tissues tested.

Its subcellular location is the peroxisome. The catalysed reaction is (25R)-3alpha,7alpha,12alpha-trihydroxy-5beta-cholestan-26-oyl-CoA + A + H2O = (24R,25R)-3alpha,7alpha,12alpha,24-tetrahydroxy-5beta-cholestan-26-oyl-CoA + AH2. It catalyses the reaction (25S)-3alpha,7alpha,12alpha-trihydroxy-5beta-cholestan-26-oyl-CoA + O2 = (24E)-3alpha,7alpha,12alpha-trihydroxy-5beta-cholest-24-en-26-oyl-CoA + H2O2. Oxidizes the CoA esters of the bile acid intermediates di- and tri-hydroxycoprostanic acids. Capable of oxidizing short as well as long chain 2-methyl branched fatty acids. In Rattus norvegicus (Rat), this protein is Peroxisomal acyl-coenzyme A oxidase 2.